Reading from the N-terminus, the 202-residue chain is B-cell CLL/lymphoma 7 protein family member B (202 aa).

A disordered region spans residues 53-202; sequence DSKEKEKSKS…PTVPQTASES (150 aa). Residues 90–99 are compositionally biased toward polar residues; it reads ENSNQSSVSD. Residues 107–123 are compositionally biased toward low complexity; sequence SSTNSSPSPQQSESLSP. A phosphoserine mark is found at S114, S118, S120, S122, S127, S148, and S152.

The protein belongs to the BCL7 family. In terms of tissue distribution, ubiquitous.

Positive regulator of apoptosis. Plays a role in the Wnt signaling pathway, negatively regulating the expression of Wnt signaling components CTNNB1 and HMGA1. Involved in cell cycle progression, maintenance of the nuclear structure and stem cell differentiation. May play a role in lung tumor development or progression. The sequence is that of B-cell CLL/lymphoma 7 protein family member B (BCL7B) from Homo sapiens (Human).